The primary structure comprises 215 residues: V-type ATP synthase subunit D (215 aa).

Belongs to the V-ATPase D subunit family.

Produces ATP from ADP in the presence of a proton gradient across the membrane. The sequence is that of V-type ATP synthase subunit D from Anaeromyxobacter sp. (strain Fw109-5).